Here is a 341-residue protein sequence, read N- to C-terminus: MTIQEELEAVKQQFSCDLSLVHSSKDLFDLKVKYLGKKGIFRGFADQLRECPVEQKATIGASINACKQYIEEVLLEKSQVILAKEEAEEFLKEKVDVSLPGEDAPLGGKHIIKKVLDDVVDIFVRFGFCVREAPNIESEKNNFSLLNFEEDHPARQMQDTFYLDPVTVLRTHTSNVQSRELARNKPPVRVVAPGECFRNEDISARSHVTFHQVEAFHVDRDVSFSDLTSMLSGFYHIFFGRKVELRYRHSYFPFVEPGIEVDISCECRGAGCSLCKHSGWLEVAGAGMIHPNVLRQANIDPEEYSGYALGMGIERLAMLKYGISDIRLFSENDLRFLRQFS.

Glu-256 contributes to the Mg(2+) binding site.

It belongs to the class-II aminoacyl-tRNA synthetase family. Phe-tRNA synthetase alpha subunit type 1 subfamily. As to quaternary structure, tetramer of two alpha and two beta subunits. Mg(2+) serves as cofactor.

The protein resides in the cytoplasm. The catalysed reaction is tRNA(Phe) + L-phenylalanine + ATP = L-phenylalanyl-tRNA(Phe) + AMP + diphosphate + H(+). This Chlamydia muridarum (strain MoPn / Nigg) protein is Phenylalanine--tRNA ligase alpha subunit (pheS).